A 158-amino-acid chain; its full sequence is 6,7-dimethyl-8-ribityllumazine synthase (158 aa).

5-amino-6-(D-ribitylamino)uracil-binding positions include phenylalanine 22, 57 to 59 (AVE), and 81 to 83 (AVI). 86 to 87 (GT) is a binding site for (2S)-2-hydroxy-3-oxobutyl phosphate. Residue histidine 89 is the Proton donor of the active site. Residue phenylalanine 114 coordinates 5-amino-6-(D-ribitylamino)uracil. (2S)-2-hydroxy-3-oxobutyl phosphate is bound at residue arginine 128.

It belongs to the DMRL synthase family. As to quaternary structure, forms an icosahedral capsid composed of 60 subunits, arranged as a dodecamer of pentamers.

The enzyme catalyses (2S)-2-hydroxy-3-oxobutyl phosphate + 5-amino-6-(D-ribitylamino)uracil = 6,7-dimethyl-8-(1-D-ribityl)lumazine + phosphate + 2 H2O + H(+). The protein operates within cofactor biosynthesis; riboflavin biosynthesis; riboflavin from 2-hydroxy-3-oxobutyl phosphate and 5-amino-6-(D-ribitylamino)uracil: step 1/2. Its function is as follows. Catalyzes the formation of 6,7-dimethyl-8-ribityllumazine by condensation of 5-amino-6-(D-ribitylamino)uracil with 3,4-dihydroxy-2-butanone 4-phosphate. This is the penultimate step in the biosynthesis of riboflavin. The chain is 6,7-dimethyl-8-ribityllumazine synthase from Shewanella putrefaciens (strain CN-32 / ATCC BAA-453).